A 206-amino-acid chain; its full sequence is Holliday junction branch migration complex subunit RuvA (206 aa).

Residues 1–63 (MISSLRGDVI…DDAHTLYAFS (63 aa)) form a domain I region. Positions 64 to 142 (TSEQRETFGI…ALEATSGQAT (79 aa)) are domain II. The segment at 143 to 150 (IGDIAATG) is flexible linker. The segment at 151 to 206 (NDTALQSQVVEALVGLGFTEAKAATAVKKILEEQNGTTDPSSVLREALQRLSGQKR) is domain III.

It belongs to the RuvA family. Homotetramer. Forms an RuvA(8)-RuvB(12)-Holliday junction (HJ) complex. HJ DNA is sandwiched between 2 RuvA tetramers; dsDNA enters through RuvA and exits via RuvB. An RuvB hexamer assembles on each DNA strand where it exits the tetramer. Each RuvB hexamer is contacted by two RuvA subunits (via domain III) on 2 adjacent RuvB subunits; this complex drives branch migration. In the full resolvosome a probable DNA-RuvA(4)-RuvB(12)-RuvC(2) complex forms which resolves the HJ.

The protein localises to the cytoplasm. Functionally, the RuvA-RuvB-RuvC complex processes Holliday junction (HJ) DNA during genetic recombination and DNA repair, while the RuvA-RuvB complex plays an important role in the rescue of blocked DNA replication forks via replication fork reversal (RFR). RuvA specifically binds to HJ cruciform DNA, conferring on it an open structure. The RuvB hexamer acts as an ATP-dependent pump, pulling dsDNA into and through the RuvAB complex. HJ branch migration allows RuvC to scan DNA until it finds its consensus sequence, where it cleaves and resolves the cruciform DNA. In Corynebacterium urealyticum (strain ATCC 43042 / DSM 7109), this protein is Holliday junction branch migration complex subunit RuvA.